The primary structure comprises 116 residues: NADH-ubiquinone oxidoreductase chain 3 (116 aa).

The next 3 membrane-spanning stretches (helical) occupy residues 3 to 23 (LITT…TISF), 56 to 76 (FFLI…LLPL), and 87 to 107 (LTLI…IYEW).

This sequence belongs to the complex I subunit 3 family.

It is found in the mitochondrion membrane. It catalyses the reaction a ubiquinone + NADH + 5 H(+)(in) = a ubiquinol + NAD(+) + 4 H(+)(out). Its function is as follows. Core subunit of the mitochondrial membrane respiratory chain NADH dehydrogenase (Complex I) that is believed to belong to the minimal assembly required for catalysis. Complex I functions in the transfer of electrons from NADH to the respiratory chain. The immediate electron acceptor for the enzyme is believed to be ubiquinone. This is NADH-ubiquinone oxidoreductase chain 3 (MT-ND3) from Oncorhynchus keta (Chum salmon).